The sequence spans 145 residues: D-aminoacyl-tRNA deacylase (145 aa).

Positions 137–138 (GP) match the Gly-cisPro motif, important for rejection of L-amino acids motif.

This sequence belongs to the DTD family. Homodimer.

It localises to the cytoplasm. The enzyme catalyses glycyl-tRNA(Ala) + H2O = tRNA(Ala) + glycine + H(+). It catalyses the reaction a D-aminoacyl-tRNA + H2O = a tRNA + a D-alpha-amino acid + H(+). An aminoacyl-tRNA editing enzyme that deacylates mischarged D-aminoacyl-tRNAs. Also deacylates mischarged glycyl-tRNA(Ala), protecting cells against glycine mischarging by AlaRS. Acts via tRNA-based rather than protein-based catalysis; rejects L-amino acids rather than detecting D-amino acids in the active site. By recycling D-aminoacyl-tRNA to D-amino acids and free tRNA molecules, this enzyme counteracts the toxicity associated with the formation of D-aminoacyl-tRNA entities in vivo and helps enforce protein L-homochirality. The sequence is that of D-aminoacyl-tRNA deacylase from Pseudomonas entomophila (strain L48).